The chain runs to 605 residues: Lysophospholipase 1 (605 aa).

A signal peptide spans 1-17; that stretch reads MILHHLLILLIINYCVA. The region spanning 30–565 is the PLA2c domain; the sequence is SCPSSQLIRS…ENYCWDGTIY (536 aa). 7 N-linked (GlcNAc...) asparagine glycosylation sites follow: Asn-199, Asn-261, Asn-399, Asn-451, Asn-465, Asn-492, and Asn-573.

It belongs to the lysophospholipase family.

Its subcellular location is the secreted. It carries out the reaction a 1-acyl-sn-glycero-3-phosphocholine + H2O = sn-glycerol 3-phosphocholine + a fatty acid + H(+). Functionally, catalyzes the release of fatty acids from lysophospholipids. Phospholipase B may well contribute to pathogenicity by abetting the fungus in damaging and traversing host cell membranes, processes which likely increase the rapidity of disseminated infection. This chain is Lysophospholipase 1, found in Candida albicans (strain SC5314 / ATCC MYA-2876) (Yeast).